The following is a 286-amino-acid chain: Nucleoid occlusion protein (286 aa).

The H-T-H motif DNA-binding region spans 147 to 166; that stretch reads EALAQRLGKNQSTVANKLRL.

This sequence belongs to the ParB family.

The protein resides in the cytoplasm. The protein localises to the nucleoid. Functionally, effects nucleoid occlusion by binding relatively nonspecifically to DNA and preventing the assembly of the division machinery in the vicinity of the nucleoid, especially under conditions that disturb the cell cycle. It helps to coordinate cell division and chromosome segregation by preventing the formation of the Z ring through the nucleoid, which would cause chromosome breakage. In Oceanobacillus iheyensis (strain DSM 14371 / CIP 107618 / JCM 11309 / KCTC 3954 / HTE831), this protein is Nucleoid occlusion protein.